The primary structure comprises 246 residues: Pyridoxine 5'-phosphate synthase (246 aa).

Asn-7 contacts 3-amino-2-oxopropyl phosphate. Residue 9–10 (DH) coordinates 1-deoxy-D-xylulose 5-phosphate. Arg-18 is a 3-amino-2-oxopropyl phosphate binding site. The active-site Proton acceptor is His-43. 2 residues coordinate 1-deoxy-D-xylulose 5-phosphate: Arg-45 and His-50. Catalysis depends on Glu-70, which acts as the Proton acceptor. Position 100 (Thr-100) interacts with 1-deoxy-D-xylulose 5-phosphate. Catalysis depends on His-190, which acts as the Proton donor. Residues Gly-191 and 212–213 (GH) each bind 3-amino-2-oxopropyl phosphate.

This sequence belongs to the PNP synthase family. In terms of assembly, homooctamer; tetramer of dimers.

Its subcellular location is the cytoplasm. The enzyme catalyses 3-amino-2-oxopropyl phosphate + 1-deoxy-D-xylulose 5-phosphate = pyridoxine 5'-phosphate + phosphate + 2 H2O + H(+). The protein operates within cofactor biosynthesis; pyridoxine 5'-phosphate biosynthesis; pyridoxine 5'-phosphate from D-erythrose 4-phosphate: step 5/5. Functionally, catalyzes the complicated ring closure reaction between the two acyclic compounds 1-deoxy-D-xylulose-5-phosphate (DXP) and 3-amino-2-oxopropyl phosphate (1-amino-acetone-3-phosphate or AAP) to form pyridoxine 5'-phosphate (PNP) and inorganic phosphate. In Prochlorococcus marinus (strain SARG / CCMP1375 / SS120), this protein is Pyridoxine 5'-phosphate synthase.